The primary structure comprises 140 residues: ATP synthase epsilon chain 1 (140 aa).

Belongs to the ATPase epsilon chain family. In terms of assembly, F-type ATPases have 2 components, CF(1) - the catalytic core - and CF(0) - the membrane proton channel. CF(1) has five subunits: alpha(3), beta(3), gamma(1), delta(1), epsilon(1). CF(0) has three main subunits: a, b and c.

The protein localises to the cell inner membrane. Produces ATP from ADP in the presence of a proton gradient across the membrane. The chain is ATP synthase epsilon chain 1 from Methylococcus capsulatus (strain ATCC 33009 / NCIMB 11132 / Bath).